The chain runs to 171 residues: 3-hydroxydecanoyl-[acyl-carrier-protein] dehydratase (171 aa).

Residue H70 is part of the active site.

Belongs to the thioester dehydratase family. FabA subfamily. As to quaternary structure, homodimer.

The protein resides in the cytoplasm. It catalyses the reaction a (3R)-hydroxyacyl-[ACP] = a (2E)-enoyl-[ACP] + H2O. It carries out the reaction (3R)-hydroxydecanoyl-[ACP] = (2E)-decenoyl-[ACP] + H2O. The catalysed reaction is (2E)-decenoyl-[ACP] = (3Z)-decenoyl-[ACP]. It participates in lipid metabolism; fatty acid biosynthesis. In terms of biological role, necessary for the introduction of cis unsaturation into fatty acids. Catalyzes the dehydration of (3R)-3-hydroxydecanoyl-ACP to E-(2)-decenoyl-ACP and then its isomerization to Z-(3)-decenoyl-ACP. Can catalyze the dehydratase reaction for beta-hydroxyacyl-ACPs with saturated chain lengths up to 16:0, being most active on intermediate chain length. This Xanthomonas oryzae pv. oryzae (strain MAFF 311018) protein is 3-hydroxydecanoyl-[acyl-carrier-protein] dehydratase.